The following is a 370-amino-acid chain: Protein SHI RELATED SEQUENCE 1 (370 aa).

The tract at residues 1–37 is disordered; the sequence is MAGFFSLDGGGGGGGGGGNNQEDHRSNTNPPPPVSEA. A compositionally biased stretch (gly residues) spans 8–19; it reads DGGGGGGGGGGN. Residues C144, C147, C155, C160, C164, and C171 each contribute to the Zn(2+) site. Positions 144-171 form a DNA-binding region, zn(2)-C6 fungal-type; degenerate; it reads CQDCGNQAKKDCSHMRCRTCCKSRGFEC. A Required for homo- and heterodimerization motif is present at residues 271 to 274; sequence IGGH.

Belongs to the SHI protein family. Forms homodimers and heterodimers with LRP1. Expressed in flowers, seeds and seedlings.

The protein resides in the nucleus. Its function is as follows. Transcription activator that binds DNA on 5'-ACTCTAC-3' and promotes auxin homeostasis-regulating gene expression (e.g. YUC genes), as well as genes affecting stamen development, cell expansion and timing of flowering. Synergistically with other SHI-related proteins, regulates gynoecium, stamen and leaf development in a dose-dependent manner, controlling apical-basal patterning. Promotes style and stigma formation, and influences vascular development during gynoecium development. May also have a role in the formation and/or maintenance of the shoot apical meristem (SAM). The protein is Protein SHI RELATED SEQUENCE 1 (SRS1) of Arabidopsis thaliana (Mouse-ear cress).